A 241-amino-acid polypeptide reads, in one-letter code: Probable transcriptional regulatory protein Daro_4067 (241 aa).

A disordered region spans residues 1–22 (MAGHSKWANIQHRKGRQDEKRG).

This sequence belongs to the TACO1 family.

It is found in the cytoplasm. The chain is Probable transcriptional regulatory protein Daro_4067 from Dechloromonas aromatica (strain RCB).